The sequence spans 281 residues: Pseudouridine-5'-phosphate glycosidase (281 aa).

Glu9 (proton donor) is an active-site residue. Residues Lys69 and Val89 each contribute to the substrate site. Asp118 contacts Mn(2+). 120–122 (SAD) lines the substrate pocket. Lys139 acts as the Nucleophile in catalysis.

This sequence belongs to the pseudouridine-5'-phosphate glycosidase family. Homotrimer. Mn(2+) serves as cofactor.

It carries out the reaction D-ribose 5-phosphate + uracil = psi-UMP + H2O. In terms of biological role, catalyzes the reversible cleavage of pseudouridine 5'-phosphate (PsiMP) to ribose 5-phosphate and uracil. Functions biologically in the cleavage direction, as part of a pseudouridine degradation pathway. The polypeptide is Pseudouridine-5'-phosphate glycosidase (Thermus thermophilus (strain ATCC BAA-163 / DSM 7039 / HB27)).